Here is a 147-residue protein sequence, read N- to C-terminus: UPF0306 protein YhbP (147 aa).

Belongs to the UPF0306 family.

The polypeptide is UPF0306 protein YhbP (Salmonella agona (strain SL483)).